The sequence spans 522 residues: Maturase K (522 aa).

This sequence belongs to the intron maturase 2 family. MatK subfamily.

It localises to the plastid. The protein resides in the chloroplast. Usually encoded in the trnK tRNA gene intron. Probably assists in splicing its own and other chloroplast group II introns. The chain is Maturase K from Aristea glauca.